A 361-amino-acid polypeptide reads, in one-letter code: DNA replication and repair protein RecF (361 aa).

ATP is bound at residue 30 to 37; that stretch reads GPNGSGKT.

Belongs to the RecF family.

The protein resides in the cytoplasm. Functionally, the RecF protein is involved in DNA metabolism; it is required for DNA replication and normal SOS inducibility. RecF binds preferentially to single-stranded, linear DNA. It also seems to bind ATP. The protein is DNA replication and repair protein RecF of Erwinia tasmaniensis (strain DSM 17950 / CFBP 7177 / CIP 109463 / NCPPB 4357 / Et1/99).